The chain runs to 205 residues: MAYEKAEWRPVTGLGKQVASGEIKSIDQVLESGRPIKEPEIVDMFLPDLEDEVLDIAMMQRMTDSGRRVQFRAVVIVGNRNGYIGFGQGKDVQVGDAIKKAITKAKMNLVKVRRGCGSWECGCAVLHSIPMQVEGTAGSVRVTLKPAPQGIGLVTGDISKKVLELAGIKDAWTFARGQTRTTINFAKATFNALKETNMIRTGRSE.

The S5 DRBM domain occupies 49 to 112; that stretch reads LEDEVLDIAM…TKAKMNLVKV (64 aa).

Belongs to the universal ribosomal protein uS5 family. As to quaternary structure, part of the 30S ribosomal subunit. Contacts protein S4.

Functionally, with S4 and S12 plays an important role in translational accuracy. This Methanoregula boonei (strain DSM 21154 / JCM 14090 / 6A8) protein is Small ribosomal subunit protein uS5.